A 303-amino-acid chain; its full sequence is Mesenteric estrogen-dependent adipogenesis protein (303 aa).

In terms of tissue distribution, highly expressed in the visceral fat depot.

It localises to the cytoplasm. In terms of biological role, involved in processes that promote adipocyte differentiation, lipid accumulation, and glucose uptake in mature adipocytes. This Homo sapiens (Human) protein is Mesenteric estrogen-dependent adipogenesis protein (MEDAG).